A 374-amino-acid chain; its full sequence is Eukaryotic translation initiation factor 3 subunit M (374 aa).

Residue Ser-2 is modified to N-acetylserine. 2 positions are modified to phosphoserine: Ser-2 and Ser-152. One can recognise a PCI domain in the interval 180–339 (AASKVMVELL…RKVVVSHSTH (160 aa)). N6-acetyllysine is present on Lys-254. Ser-367 is subject to Phosphoserine.

It belongs to the eIF-3 subunit M family. Component of the eukaryotic translation initiation factor 3 (eIF-3) complex, which is composed of 13 subunits: EIF3A, EIF3B, EIF3C, EIF3D, EIF3E, EIF3F, EIF3G, EIF3H, EIF3I, EIF3J, EIF3K, EIF3L and EIF3M. The eIF-3 complex appears to include 3 stable modules: module A is composed of EIF3A, EIF3B, EIF3G and EIF3I; module B is composed of EIF3F, EIF3H, and EIF3M; and module C is composed of EIF3C, EIF3D, EIF3E, EIF3K and EIF3L. EIF3C of module C binds EIF3B of module A and EIF3H of module B, thereby linking the three modules. EIF3J is a labile subunit that binds to the eIF-3 complex via EIF3B. The eIF-3 complex interacts with RPS6KB1 under conditions of nutrient depletion. Mitogenic stimulation leads to binding and activation of a complex composed of MTOR and RPTOR, leading to phosphorylation and release of RPS6KB1 and binding of EIF4B to eIF-3.

Its subcellular location is the cytoplasm. Its function is as follows. Component of the eukaryotic translation initiation factor 3 (eIF-3) complex, which is required for several steps in the initiation of protein synthesis. The eIF-3 complex associates with the 40S ribosome and facilitates the recruitment of eIF-1, eIF-1A, eIF-2:GTP:methionyl-tRNAi and eIF-5 to form the 43S pre-initiation complex (43S PIC). The eIF-3 complex stimulates mRNA recruitment to the 43S PIC and scanning of the mRNA for AUG recognition. The eIF-3 complex is also required for disassembly and recycling of post-termination ribosomal complexes and subsequently prevents premature joining of the 40S and 60S ribosomal subunits prior to initiation. The eIF-3 complex specifically targets and initiates translation of a subset of mRNAs involved in cell proliferation, including cell cycling, differentiation and apoptosis, and uses different modes of RNA stem-loop binding to exert either translational activation or repression. This is Eukaryotic translation initiation factor 3 subunit M from Pongo abelii (Sumatran orangutan).